Consider the following 213-residue polypeptide: Cytidylate kinase (213 aa).

9-17 (GPAASGKGT) lines the ATP pocket.

This sequence belongs to the cytidylate kinase family. Type 1 subfamily.

The protein resides in the cytoplasm. It catalyses the reaction CMP + ATP = CDP + ADP. The catalysed reaction is dCMP + ATP = dCDP + ADP. The sequence is that of Cytidylate kinase from Caulobacter vibrioides (strain ATCC 19089 / CIP 103742 / CB 15) (Caulobacter crescentus).